An 852-amino-acid chain; its full sequence is Taste receptor type 1 member 3 (852 aa).

Positions 1–20 (MLGPAVLGLSLWALLQPGAG) are cleaved as a signal peptide. Residues 21–570 (APLCLSQQLR…FLAWGEPAVL (550 aa)) are Extracellular-facing. N-linked (GlcNAc...) asparagine glycosylation is found at N85, N130, N264, N285, N380, N411, N432, and N475. The chain crosses the membrane as a helical span at residues 571-591 (LLLLLLSLALGLVLAALGLFV). Over 592–603 (HHRDSPLVQASG) the chain is Cytoplasmic. A helical membrane pass occupies residues 604 to 624 (GPLACFGLVCLGLVCLSVLLF). Residues 625-639 (PGQPSPAQCLAQQPL) lie on the Extracellular side of the membrane. Residues 640–660 (SHLPLTGCLSTLFLQAAEIFV) form a helical membrane-spanning segment. The Cytoplasmic segment spans residues 661 to 682 (ESELPLSWADRLSGCLRGPWAW). A helical membrane pass occupies residues 683-703 (LVVLLAMLVEVALCTWYLVAF). Over 704 to 729 (PPEVVTDWHMLPTEALVHCRTRSWVS) the chain is Extracellular. A helical membrane pass occupies residues 730–750 (FGLAHATNATLAFLCFLGTFL). The Cytoplasmic portion of the chain corresponds to 751-762 (VRSQPGRYNRAR). The helical transmembrane segment at 763–783 (GLTFAMLAYFITWVSFVPLLA) threads the bilayer. At 784 to 791 (NVQVVLRP) the chain is on the extracellular side. A helical transmembrane segment spans residues 792-812 (AVQMGALLLCVLGILAAFHLP). Residues 813 to 852 (RCYLLIRQPGLNTPEFFLGGGPGDAQGRNDGDTGNQGKHE) lie on the Cytoplasmic side of the membrane. Positions 833–852 (GPGDAQGRNDGDTGNQGKHE) are disordered. The segment covering 839–852 (GRNDGDTGNQGKHE) has biased composition (basic and acidic residues).

Belongs to the G-protein coupled receptor 3 family. TAS1R subfamily. As to quaternary structure, forms homodimers or heterodimers with TAS1R1 and TAS1R2.

It is found in the cell membrane. In terms of biological role, putative taste receptor. TAS1R1/TAS1R3 responds to the umami taste stimulus (the taste of monosodium glutamate). TAS1R2/TAS1R3 recognizes diverse natural and synthetic sweeteners. TAS1R3 is essential for the recognition and response to the disaccharide trehalose. Sequence differences within and between species can significantly influence the selectivity and specificity of taste responses. The protein is Taste receptor type 1 member 3 (TAS1R3) of Gorilla gorilla gorilla (Western lowland gorilla).